The following is a 313-amino-acid chain: 2-phosphoglycerate kinase (313 aa).

The region spanning 8–95 is the ATP-cone domain; the sequence is NKILVKDKDY…LWRRVLKKHS (88 aa).

This sequence belongs to the 2-phosphoglycerate kinase family. The cofactor is a divalent metal cation.

It catalyses the reaction (2R)-2-phosphoglycerate + ATP = (2R)-2,3-bisphosphoglycerate + ADP + H(+). Its pathway is thermoadapter biosynthesis; cyclic 2,3-diphosphoglycerate biosynthesis; cyclic 2,3-diphosphoglycerate from 2-phospho-D-glycerate: step 1/2. In terms of biological role, catalyzes the phosphorylation of 2-phosphoglycerate to 2,3-diphosphoglycerate. Involved in the biosynthesis of cyclic 2,3-bisphosphoglycerate, a thermoprotectant. This chain is 2-phosphoglycerate kinase, found in Methanococcus vannielii (strain ATCC 35089 / DSM 1224 / JCM 13029 / OCM 148 / SB).